Reading from the N-terminus, the 159-residue chain is Putative ribosomal RNA large subunit methyltransferase H (159 aa).

S-adenosyl-L-methionine contacts are provided by residues Leu76, Gly108, and 127 to 132 (FSKMTF).

The protein belongs to the RNA methyltransferase RlmH family.

It is found in the cytoplasm. It carries out the reaction pseudouridine(1915) in 23S rRNA + S-adenosyl-L-methionine = N(3)-methylpseudouridine(1915) in 23S rRNA + S-adenosyl-L-homocysteine + H(+). Functionally, specifically methylates the pseudouridine at position 1915 (m3Psi1915) in 23S rRNA. In Methanococcus maripaludis (strain C7 / ATCC BAA-1331), this protein is Putative ribosomal RNA large subunit methyltransferase H.